Consider the following 307-residue polypeptide: Elongation factor Ts (307 aa).

The tract at residues 80-83 (TDFV) is involved in Mg(2+) ion dislocation from EF-Tu.

It belongs to the EF-Ts family.

Its subcellular location is the cytoplasm. Functionally, associates with the EF-Tu.GDP complex and induces the exchange of GDP to GTP. It remains bound to the aminoacyl-tRNA.EF-Tu.GTP complex up to the GTP hydrolysis stage on the ribosome. This is Elongation factor Ts from Xanthobacter autotrophicus (strain ATCC BAA-1158 / Py2).